The sequence spans 209 residues: Uracil phosphoribosyltransferase (209 aa).

5-phospho-alpha-D-ribose 1-diphosphate-binding positions include Arg79, Arg104, and 131–139 (DPMLATGGS). Uracil is bound by residues Ile194 and 199 to 201 (GDA). Asp200 is a 5-phospho-alpha-D-ribose 1-diphosphate binding site.

Belongs to the UPRTase family. It depends on Mg(2+) as a cofactor.

The enzyme catalyses UMP + diphosphate = 5-phospho-alpha-D-ribose 1-diphosphate + uracil. The protein operates within pyrimidine metabolism; UMP biosynthesis via salvage pathway; UMP from uracil: step 1/1. Allosterically activated by GTP. Functionally, catalyzes the conversion of uracil and 5-phospho-alpha-D-ribose 1-diphosphate (PRPP) to UMP and diphosphate. The sequence is that of Uracil phosphoribosyltransferase from Streptococcus pyogenes serotype M49 (strain NZ131).